We begin with the raw amino-acid sequence, 207 residues long: ATFDVVNQCTFTVWAGASPGGGKQLDQGQTWTITVAPGSTKARIWGRTGCNFDANGQGKCQTGDCNGLLQCQGYGSPPNTLAEFSLNQPNNLDYVDISLVDGFNIPMDFSPAAAGVCKDIRCATDITAQCPAELQAPGGCNNPCTVYKTNEYCCTNGQGTCGPTALSKFFKDRCPDAYSYPQDDPTSLFTCPAGTNYKVVFCPNLDA.

Intrachain disulfides connect cysteine 9/cysteine 202, cysteine 50/cysteine 60, cysteine 65/cysteine 71, cysteine 117/cysteine 191, cysteine 122/cysteine 174, cysteine 130/cysteine 140, cysteine 144/cysteine 153, and cysteine 154/cysteine 161.

The protein belongs to the thaumatin family. As to quaternary structure, monomer. Post-translationally, not glycosylated.

The protein localises to the secreted. Its function is as follows. Acidic thaumatin-like protein. Exhibits weak beta-1,3-glucanase activity with laminarin as substrate. The sequence is that of Thaumatin-like protein 1 (TLP1) from Manilkara zapota (Sapodilla plum).